We begin with the raw amino-acid sequence, 67 residues long: MLAMKSFSQVSKSYKASAPSKKLTTLFYVAYITLGLTTPFLLPARMASKDTHYYKDEFCSQRSYTRF.

This is an uncharacterized protein from Saccharomyces cerevisiae (strain ATCC 204508 / S288c) (Baker's yeast).